The chain runs to 453 residues: Phenylalanine-4-hydroxylase (453 aa).

Ala2 is modified (N-acetylalanine). Ser16 is modified (phosphoserine). One can recognise an ACT domain in the interval 36–114; that stretch reads SLIFSLKEEV…TVHELSRDKE (79 aa). Residues His285, His290, and Glu330 each contribute to the Fe cation site.

This sequence belongs to the biopterin-dependent aromatic amino acid hydroxylase family. In terms of assembly, homodimer and homotetramer. Requires Fe(2+) as cofactor. In terms of processing, phosphorylation at Ser-16 increases basal activity and facilitates activation by the substrate phenylalanine.

It carries out the reaction (6R)-L-erythro-5,6,7,8-tetrahydrobiopterin + L-phenylalanine + O2 = (4aS,6R)-4a-hydroxy-L-erythro-5,6,7,8-tetrahydrobiopterin + L-tyrosine. The protein operates within amino-acid degradation; L-phenylalanine degradation; acetoacetate and fumarate from L-phenylalanine: step 1/6. Its activity is regulated as follows. N-terminal region of PAH is thought to contain allosteric binding sites for phenylalanine and to constitute an 'inhibitory' domain that regulates the activity of a catalytic domain in the C-terminal portion of the molecule. In terms of biological role, catalyzes the hydroxylation of L-phenylalanine to L-tyrosine. The polypeptide is Phenylalanine-4-hydroxylase (Pah) (Mus musculus (Mouse)).